Reading from the N-terminus, the 447-residue chain is Probable glycine dehydrogenase (decarboxylating) subunit 1 (447 aa).

Belongs to the GcvP family. N-terminal subunit subfamily. The glycine cleavage system is composed of four proteins: P, T, L and H. In this organism, the P 'protein' is a heterodimer of two subunits.

It catalyses the reaction N(6)-[(R)-lipoyl]-L-lysyl-[glycine-cleavage complex H protein] + glycine + H(+) = N(6)-[(R)-S(8)-aminomethyldihydrolipoyl]-L-lysyl-[glycine-cleavage complex H protein] + CO2. In terms of biological role, the glycine cleavage system catalyzes the degradation of glycine. The P protein binds the alpha-amino group of glycine through its pyridoxal phosphate cofactor; CO(2) is released and the remaining methylamine moiety is then transferred to the lipoamide cofactor of the H protein. The sequence is that of Probable glycine dehydrogenase (decarboxylating) subunit 1 from Bacillus cereus (strain AH187).